Reading from the N-terminus, the 432-residue chain is 2-oxoglutarate-dependent dioxygenase AOP2 (432 aa).

The Fe2OG dioxygenase domain occupies serine 281–proline 378. Positions 301, 303, and 358 each coordinate Fe cation. Arginine 369 is a 2-oxoglutarate binding site.

Belongs to the iron/ascorbate-dependent oxidoreductase family. Fe(2+) is required as a cofactor.

In terms of biological role, 2-oxoglutarate-dependent dioxygenase involved in glucosinolates biosynthesis. Catalyzes the conversion of methylsulfinylalkyl glucosinolates to alkenyl glucosinolates. This Arabidopsis thaliana (Mouse-ear cress) protein is 2-oxoglutarate-dependent dioxygenase AOP2 (AOP2).